A 667-amino-acid chain; its full sequence is Long-chain-fatty-acid--CoA ligase ACSBG2 (667 aa).

Residues 227–235, 418–423, aspartate 496, arginine 511, and arginine 624 each bind ATP; these read TSGTTGTPK and EIYGMS.

This sequence belongs to the ATP-dependent AMP-binding enzyme family. Bubblegum subfamily. In terms of tissue distribution, testis- and brainstem-specific. Expressed in pubertal and adult testis. Enriched in germ cells and Sertoli cells while present at a lower level in Leydig cells. Present in testicular Sertoli cells and large motoneurons in the medulla oblongata and cervical spinal cord (at protein level).

It is found in the cytoplasm. Its subcellular location is the membrane. The catalysed reaction is a long-chain fatty acid + ATP + CoA = a long-chain fatty acyl-CoA + AMP + diphosphate. It catalyses the reaction (5Z,8Z,11Z,14Z)-eicosatetraenoate + ATP + CoA = (5Z,8Z,11Z,14Z)-eicosatetraenoyl-CoA + AMP + diphosphate. The enzyme catalyses hexadecanoate + ATP + CoA = hexadecanoyl-CoA + AMP + diphosphate. It carries out the reaction (9Z)-octadecenoate + ATP + CoA = (9Z)-octadecenoyl-CoA + AMP + diphosphate. The catalysed reaction is (9Z,12Z)-octadecadienoate + ATP + CoA = (9Z,12Z)-octadecadienoyl-CoA + AMP + diphosphate. It catalyses the reaction tetracosanoate + ATP + CoA = tetracosanoyl-CoA + AMP + diphosphate. Its function is as follows. Catalyzes the conversion of fatty acids such as long chain and very long-chain fatty acids to their active form acyl-CoAs for both synthesis of cellular lipids, and degradation via beta-oxidation. Can activate diverse saturated, monosaturated and polyunsaturated fatty acids. Has increased ability to activate oleic and linoleic acid. May play a role in spermatogenesis. This Mus musculus (Mouse) protein is Long-chain-fatty-acid--CoA ligase ACSBG2.